A 376-amino-acid chain; its full sequence is tRNA-specific 2-thiouridylase MnmA (376 aa).

ATP is bound by residues 16 to 23 (AMSGGVDS) and Leu-42. Cys-111 (nucleophile) is an active-site residue. Cys-111 and Cys-210 are joined by a disulfide. Gly-135 provides a ligand contact to ATP. Residues 158-160 (KDQ) form an interaction with tRNA region. The active-site Cysteine persulfide intermediate is the Cys-210.

This sequence belongs to the MnmA/TRMU family.

The protein localises to the cytoplasm. The enzyme catalyses S-sulfanyl-L-cysteinyl-[protein] + uridine(34) in tRNA + AH2 + ATP = 2-thiouridine(34) in tRNA + L-cysteinyl-[protein] + A + AMP + diphosphate + H(+). Its function is as follows. Catalyzes the 2-thiolation of uridine at the wobble position (U34) of tRNA, leading to the formation of s(2)U34. In Streptomyces coelicolor (strain ATCC BAA-471 / A3(2) / M145), this protein is tRNA-specific 2-thiouridylase MnmA.